The chain runs to 737 residues: Polyribonucleotide nucleotidyltransferase (737 aa).

The Mg(2+) site is built by Asp-489 and Asp-495. A KH domain is found at 556–615; sequence PKIDTIKIDVDKIKIVIGKGGETIDKIIAETGVKIDIDEEGNVSIYSSDQDAINRAKEII. Positions 625 to 693 constitute an S1 motif domain; it reads DEVYRAKVVR…EKGRIDASMK (69 aa). Residues 691–737 are disordered; it reads SMKALLPRPPKPEHDEKGEKSERPHRPRHHKDHKPKKEFTETPKDSE. The segment covering 700 to 714 has biased composition (basic and acidic residues); sequence PKPEHDEKGEKSERP. Positions 715–724 are enriched in basic residues; it reads HRPRHHKDHK. Residues 725 to 737 are compositionally biased toward basic and acidic residues; that stretch reads PKKEFTETPKDSE.

The protein belongs to the polyribonucleotide nucleotidyltransferase family. Mg(2+) is required as a cofactor.

It localises to the cytoplasm. The catalysed reaction is RNA(n+1) + phosphate = RNA(n) + a ribonucleoside 5'-diphosphate. In terms of biological role, involved in mRNA degradation. Catalyzes the phosphorolysis of single-stranded polyribonucleotides processively in the 3'- to 5'-direction. In Streptococcus pneumoniae (strain 70585), this protein is Polyribonucleotide nucleotidyltransferase.